Reading from the N-terminus, the 435-residue chain is Probable xyloglucan galactosyltransferase GT19 (435 aa).

At 1–6 (MASKST) the chain is on the cytoplasmic side. Residues 7 to 23 (VTTLTIFFFFFFFFIEP) traverse the membrane as a helical; Signal-anchor for type II membrane protein segment. The Lumenal segment spans residues 24 to 435 (KVQSQQISAV…GVLDRIISRV (412 aa)). Asparagine 140, asparagine 203, and asparagine 277 each carry an N-linked (GlcNAc...) asparagine glycan.

Belongs to the glycosyltransferase 47 family. Expressed in roots, hypocotyls, cotyledons, leaves, stems, stamens and pollen grains.

The protein resides in the golgi apparatus membrane. Functions in xyloglucan synthesis by adding side chains to the xylosylated glucan backbone. Involved in the galactosylation of hemicellulose xyloglucan. The polypeptide is Probable xyloglucan galactosyltransferase GT19 (Arabidopsis thaliana (Mouse-ear cress)).